The primary structure comprises 166 residues: Phosphopantetheine adenylyltransferase (166 aa).

Ser-8 lines the substrate pocket. Residues 8-9 and His-16 contribute to the ATP site; that span reads SF. The substrate site is built by Lys-40, Thr-72, and Arg-86. ATP is bound by residues 87–89, Glu-97, and 122–128; these read GLR and HSFLSSS.

It belongs to the bacterial CoaD family. In terms of assembly, homohexamer. It depends on Mg(2+) as a cofactor.

It is found in the cytoplasm. The catalysed reaction is (R)-4'-phosphopantetheine + ATP + H(+) = 3'-dephospho-CoA + diphosphate. The protein operates within cofactor biosynthesis; coenzyme A biosynthesis; CoA from (R)-pantothenate: step 4/5. In terms of biological role, reversibly transfers an adenylyl group from ATP to 4'-phosphopantetheine, yielding dephospho-CoA (dPCoA) and pyrophosphate. The protein is Phosphopantetheine adenylyltransferase of Synechococcus sp. (strain RCC307).